Reading from the N-terminus, the 137-residue chain is Nucleoside diphosphate kinase (137 aa).

ATP contacts are provided by lysine 9, phenylalanine 57, arginine 85, threonine 91, arginine 102, and asparagine 112. The active-site Pros-phosphohistidine intermediate is histidine 115.

The protein belongs to the NDK family. Homotetramer. Requires Mg(2+) as cofactor.

Its subcellular location is the cytoplasm. The catalysed reaction is a 2'-deoxyribonucleoside 5'-diphosphate + ATP = a 2'-deoxyribonucleoside 5'-triphosphate + ADP. It carries out the reaction a ribonucleoside 5'-diphosphate + ATP = a ribonucleoside 5'-triphosphate + ADP. In terms of biological role, major role in the synthesis of nucleoside triphosphates other than ATP. The ATP gamma phosphate is transferred to the NDP beta phosphate via a ping-pong mechanism, using a phosphorylated active-site intermediate. This is Nucleoside diphosphate kinase from Campylobacter curvus (strain 525.92).